A 249-amino-acid chain; its full sequence is General transcription factor IIF subunit 2 (249 aa).

Alanine 2 carries the post-translational modification N-acetylalanine. An N6-acetyllysine mark is found at lysine 22, lysine 33, and lysine 137. Serine 142 bears the Phosphoserine mark. The DNA site is built by glycine 227 and histidine 229. A Phosphoserine modification is found at serine 248.

Belongs to the TFIIF beta subunit family. As to quaternary structure, heterodimer of an alpha and a beta subunit. Interacts with HTATSF1 and URI1. Interacts with GPBP1. Interacts with GTF2B (via N-terminus); this interaction is inhibited in presence of GTF2F1. Part of TBP-based Pol II pre-initiation complex (PIC), in which Pol II core assembles with general transcription factors and other specific initiation factors including GTF2E1, GTF2E2, GTF2F1, GTF2F2, TCEA1, ERCC2, ERCC3, GTF2H2, GTF2H3, GTF2H4, GTF2H5, GTF2A1, GTF2A2, GTF2B and TBP; this large multi-subunit PIC complex mediates DNA unwinding and targets Pol II core to the transcription start site where the first phosphodiester bond forms.

The protein resides in the nucleus. Functionally, TFIIF is a general transcription initiation factor that binds to RNA polymerase II and helps to recruit it to the initiation complex in collaboration with TFIIB. This is General transcription factor IIF subunit 2 (Gtf2f2) from Mus musculus (Mouse).